An 882-amino-acid chain; its full sequence is HTH-type transcriptional regulator AlkS (882 aa).

51-58 (APPGYGKT) contributes to the ATP binding site. The 66-residue stretch at 815 to 880 (ENKADALLTR…QATIEAERQG (66 aa)) folds into the HTH luxR-type domain. Residues 839–858 (NKQIATNMHVTEDAIKWHMR) constitute a DNA-binding region (H-T-H motif).

It functions in the pathway hydrocarbon metabolism; alkane degradation. This protein activates the expression of alkBFGHJKL operon in the presence of alkanes. In Ectopseudomonas oleovorans (Pseudomonas oleovorans), this protein is HTH-type transcriptional regulator AlkS (alkS).